The following is a 225-amino-acid chain: ATP-dependent dethiobiotin synthetase BioD (225 aa).

Position 13–18 (13–18 (NVGKTL)) interacts with ATP. Position 17 (threonine 17) interacts with Mg(2+). Lysine 38 is a catalytic residue. Threonine 42 serves as a coordination point for substrate. ATP contacts are provided by residues aspartate 55, 116–119 (EGAG), 176–177 (NH), and 205–207 (PWL). Aspartate 55 and glutamate 116 together coordinate Mg(2+).

This sequence belongs to the dethiobiotin synthetase family. As to quaternary structure, homodimer. Mg(2+) is required as a cofactor.

The protein localises to the cytoplasm. It catalyses the reaction (7R,8S)-7,8-diammoniononanoate + CO2 + ATP = (4R,5S)-dethiobiotin + ADP + phosphate + 3 H(+). The protein operates within cofactor biosynthesis; biotin biosynthesis; biotin from 7,8-diaminononanoate: step 1/2. In terms of biological role, catalyzes a mechanistically unusual reaction, the ATP-dependent insertion of CO2 between the N7 and N8 nitrogen atoms of 7,8-diaminopelargonic acid (DAPA, also called 7,8-diammoniononanoate) to form a ureido ring. This is ATP-dependent dethiobiotin synthetase BioD from Baumannia cicadellinicola subsp. Homalodisca coagulata.